The chain runs to 1242 residues: DNA-directed RNA polymerase RPB2 homolog (1242 aa).

The C4-type zinc-finger motif lies at 1180–1201 (CRNCGEPAIYNASHPIYKCMNC).

This sequence belongs to the RNA polymerase beta chain family. Part of the viral DNA-directed RNA polymerase that consists of 8 polII-like subunits (RPB1, RPB2, RPB3, RPB5, RPB6, RPB7, RPB9, RPB10), a capping enzyme and a termination factor.

It localises to the host cytoplasm. The protein localises to the virion. The catalysed reaction is RNA(n) + a ribonucleoside 5'-triphosphate = RNA(n+1) + diphosphate. Its function is as follows. Catalytic component of the DNA-directed RNA polymerase (RNAP) that catalyzes the transcription in the cytoplasm of viral DNA into RNA using the four ribonucleoside triphosphates as substrates. Forms the polymerase active center together with RPB1. Part of the core element with the central large cleft, the clamp element that moves to open and close the cleft and the jaws that are thought to grab the incoming DNA template. The polypeptide is DNA-directed RNA polymerase RPB2 homolog (African swine fever virus (isolate Pig/Kenya/KEN-50/1950) (ASFV)).